The primary structure comprises 1515 residues: Lysophospholipase nte1 (1515 aa).

Topologically, residues methionine 1 to threonine 59 are cytoplasmic. A helical membrane pass occupies residues serine 60–isoleucine 80. Residues lysine 81–threonine 102 are Lumenal-facing. The chain crosses the membrane as a helical span at residues methionine 103–valine 123. At arginine 124 to isoleucine 1515 the chain is on the cytoplasmic side. 3 disordered regions span residues methionine 278–methionine 303, valine 519–asparagine 580, and valine 617–glycine 639. Composition is skewed to polar residues over residues leucine 543 to alanine 554 and proline 566 to arginine 579. A nucleoside 3',5'-cyclic phosphate-binding positions include serine 670 to tyrosine 789 and arginine 835 to arginine 955. Residues leucine 1212–lysine 1376 enclose the PNPLA domain. A GXGXXG motif is present at residues glycine 1216–glycine 1221. The GXSXG motif lies at glycine 1243–glycine 1247. Serine 1245 (nucleophile) is an active-site residue. The active-site Proton acceptor is the aspartate 1363. The DGA/G signature appears at aspartate 1363–glycine 1365.

This sequence belongs to the NTE family.

It is found in the endoplasmic reticulum membrane. It carries out the reaction a 1-acyl-sn-glycero-3-phosphocholine + H2O = sn-glycerol 3-phosphocholine + a fatty acid + H(+). With respect to regulation, inhibited by organophosphorus esters. Functionally, intracellular phospholipase B that catalyzes the double deacylation of phosphatidylcholine (PC) to glycerophosphocholine (GroPCho). Plays an important role in membrane lipid homeostasis. Responsible for the rapid PC turnover in response to inositol, elevated temperatures, or when choline is present in the growth medium. This Neurospora crassa (strain ATCC 24698 / 74-OR23-1A / CBS 708.71 / DSM 1257 / FGSC 987) protein is Lysophospholipase nte1 (nte1).